Here is a 146-residue protein sequence, read N- to C-terminus: MAGRKGGDRKKAVTRSVKAGLQFPVGRIGRYLKKGRYAQRVGSGAPVYLAAVLEYLAAEVLELAGNAAKDNKKTRIIPRHLLLAVRNDQELGRLLAGVTIAHGGVIPNINSVLLPKKSPAAAEKEAKSPKKKTSTKSPKKKVAAKE.

Positions 118–146 (SPAAAEKEAKSPKKKTSTKSPKKKVAAKE) are disordered. Short sequence motifs (SPKK motif) lie at residues 128–131 (SPKK) and 137–140 (SPKK). The span at 129 to 146 (PKKKTSTKSPKKKVAAKE) shows a compositional bias: basic residues.

Belongs to the histone H2A family. As to quaternary structure, the nucleosome is a histone octamer containing two molecules each of H2A, H2B, H3 and H4 assembled in one H3-H4 heterotetramer and two H2A-H2B heterodimers. The octamer wraps approximately 147 bp of DNA. Phosphorylated within its C-terminal part, probably at the SPKK motifs. As to expression, expressed preferentially in meristematic tissues of young seedlings, in stigma and ovary but not in pollen.

It localises to the nucleus. The protein resides in the chromosome. Functionally, core component of nucleosome. Nucleosomes wrap and compact DNA into chromatin, limiting DNA accessibility to the cellular machineries which require DNA as a template. Histones thereby play a central role in transcription regulation, DNA repair, DNA replication and chromosomal stability. DNA accessibility is regulated via a complex set of post-translational modifications of histones, also called histone code, and nucleosome remodeling. The protein is Histone H2A.1 (H2A-9) of Triticum aestivum (Wheat).